Consider the following 830-residue polypeptide: FYN-binding protein 1 (830 aa).

A disordered region spans residues 1–501; it reads MDGKTDVKSL…REKKEQELRK (501 aa). An N6-acetyllysine modification is found at lysine 13. Residues 15–55 are compositionally biased toward polar residues; sequence NTGSNPTEEVSTSSRPFKVAGQNSPSGIQSKKNLFDNQGNA. Residues serine 38 and serine 56 each carry the phosphoserine modification. Residues 79-89 show a composition bias toward basic and acidic residues; the sequence is TYEEKSEKEPK. Phosphoserine is present on serine 233. Composition is skewed to basic and acidic residues over residues 248–259 and 284–296; these read PAKEDPEDKDHG and NSEE…KTDI. The residue at position 329 (serine 329) is a Phosphoserine. The segment covering 330-339 has biased composition (basic and acidic residues); that stretch reads QEKEGDKDSA. Pro residues-rich tracts occupy residues 344 to 362 and 391 to 407; these read KPLP…PSRP and LPPP…PLPA. Positions 347 to 447 are interaction with SKAP1; sequence PPLSVLGPPP…QDGVMHSDGT (101 aa). The span at 450 to 464 shows a compositional bias: acidic residues; sequence LEEEQESDGEMYEDI. Serine 456 bears the Phosphoserine mark. The SH2-binding signature appears at 461 to 464; the sequence is YEDI. A compositionally biased stretch (basic and acidic residues) spans 465-500; the sequence is ESSKERDKKREKEEKKRLELERKEQKEREKKEQELR. A coiled-coil region spans residues 465–502; the sequence is ESSKERDKKREKEEKKRLELERKEQKEREKKEQELRKK. The Nuclear localization signal signature appears at 479–486; that stretch reads KKRLELER. An SH3 1 domain is found at 510 to 571; the sequence is QVIHHAKACC…KTTAVKIDYD (62 aa). Tyrosine 570 carries the phosphotyrosine modification. Serine 572 carries the phosphoserine modification. The SH2-binding; to LCP2 signature appears at 595-598; that stretch reads YDDV. Disordered regions lie at residues 601–646 and 660–739; these read QDAP…DEKT and KDER…EKEE. Residues 621-636 are compositionally biased toward acidic residues; that stretch reads ADDDIYDGIEEEDADD. The SH2-binding; to FYN signature appears at 626–629; it reads YDGI. Over residues 660–675 the composition is skewed to basic and acidic residues; that stretch reads KDERKKSIREKPKVSE. The segment covering 693-703 has biased composition (acidic residues); sequence VGEEVYDDVDA. Tyrosine 698 carries the phosphotyrosine modification. Basic and acidic residues predominate over residues 722-739; that stretch reads TKAEEKDPKKLKKQEKEE. Positions 732 to 739 match the Nuclear localization signal motif; that stretch reads LKKQEKEE. Positions 747-815 constitute an SH3 2 domain; the sequence is KYDGEIRVLY…LRSYLVDNDG (69 aa).

Part of a complex consisting of SKAP2, FYB1 and PTPNS1. Part of a complex consisting of SKAP2, FYB1 and LILRB3. Part of a complex consisting of SKAP1, FYB1 and CLNK. Interacts with CLNK (via its SH2 domain) and FYN; this interaction allows SKAP1 and FYB1 to recruit FYN to the complex, thus promoting the phosphorylation of CLNK by FYN. Interacts with FYN. Interacts with LCP2. Interacts with SKAP1. Interacts with SKAP2. Interacts with FASLG. Interacts with EVL. Interacts with TMEM47. Interacts with LCK. Post-translationally, T-cell receptor ligation leads to increased tyrosine phosphorylation.

It localises to the cytoplasm. It is found in the nucleus. The protein resides in the cell junction. Acts as an adapter protein of the FYN and LCP2 signaling cascades in T-cells. May play a role in linking T-cell signaling to remodeling of the actin cytoskeleton. Modulates the expression of IL2. Involved in platelet activation. Prevents the degradation of SKAP1 and SKAP2. May be involved in high affinity immunoglobulin epsilon receptor signaling in mast cells. This Rattus norvegicus (Rat) protein is FYN-binding protein 1.